A 128-amino-acid polypeptide reads, in one-letter code: Ribonuclease pancreatic (128 aa).

The interval 1–23 (AESSAMKFQRQHVDSEGSSSSNA) is disordered. Substrate-binding residues include K7 and R10. H12 acts as the Proton acceptor in catalysis. Intrachain disulfides connect C26–C84, C40–C95, C58–C110, and C65–C72. Residues 41 to 45 (KPVNT), K66, and R85 contribute to the substrate site. H119 acts as the Proton donor in catalysis.

The protein belongs to the pancreatic ribonuclease family. Monomer. Interacts with and forms tight 1:1 complexes with RNH1. Dimerization of two such complexes may occur. Interaction with RNH1 inhibits this protein. As to expression, pancreas.

It is found in the secreted. It catalyses the reaction an [RNA] containing cytidine + H2O = an [RNA]-3'-cytidine-3'-phosphate + a 5'-hydroxy-ribonucleotide-3'-[RNA].. The catalysed reaction is an [RNA] containing uridine + H2O = an [RNA]-3'-uridine-3'-phosphate + a 5'-hydroxy-ribonucleotide-3'-[RNA].. Endonuclease that catalyzes the cleavage of RNA on the 3' side of pyrimidine nucleotides. Acts on single-stranded and double-stranded RNA. This Hydrochoerus hydrochaeris (Capybara) protein is Ribonuclease pancreatic (RNASE1).